The sequence spans 33 residues: Glucagon-2 (33 aa).

Belongs to the glucagon family.

Its subcellular location is the secreted. Promotes hydrolysis of glycogen and lipids, and raises the blood sugar level. The polypeptide is Glucagon-2 (gcg2) (Oreochromis niloticus (Nile tilapia)).